Here is a 378-residue protein sequence, read N- to C-terminus: Transmembrane 6 superfamily member 2 (378 aa).

9 helical membrane passes run 34 to 54 (LCVV…VYSL), 63 to 83 (PLYA…VIAL), 110 to 130 (IFIC…MAGA), 140 to 160 (LGLY…PGNI), 170 to 190 (PTFF…MRIF), 219 to 239 (LTLI…GLVV), 269 to 289 (MLMY…ALTF), 291 to 311 (GCSW…QAQF), and 332 to 352 (TWAT…LLAL). 2 consecutive EXPERA domains span residues 61-186 (YDPL…CWAG) and 217-351 (ADLT…HLLA).

It belongs to the TM6SF family.

The protein resides in the endoplasmic reticulum membrane. Its subcellular location is the endoplasmic reticulum-Golgi intermediate compartment membrane. Its function is as follows. Regulator of liver fat metabolism influencing triglyceride secretion and hepatic lipid droplet content. May function as sterol isomerase. In Rattus norvegicus (Rat), this protein is Transmembrane 6 superfamily member 2 (Tm6sf2).